The following is a 323-amino-acid chain: Beta-ketoacyl-[acyl-carrier-protein] synthase III (323 aa).

Catalysis depends on residues Cys113 and His250. The segment at 251–255 (QANLR) is ACP-binding. Asn280 is a catalytic residue.

Belongs to the thiolase-like superfamily. FabH family. In terms of assembly, homodimer.

Its subcellular location is the cytoplasm. The enzyme catalyses malonyl-[ACP] + acetyl-CoA + H(+) = 3-oxobutanoyl-[ACP] + CO2 + CoA. It participates in lipid metabolism; fatty acid biosynthesis. Catalyzes the condensation reaction of fatty acid synthesis by the addition to an acyl acceptor of two carbons from malonyl-ACP. Catalyzes the first condensation reaction which initiates fatty acid synthesis and may therefore play a role in governing the total rate of fatty acid production. Possesses both acetoacetyl-ACP synthase and acetyl transacylase activities. Its substrate specificity determines the biosynthesis of branched-chain and/or straight-chain of fatty acids. This is Beta-ketoacyl-[acyl-carrier-protein] synthase III from Paracoccus denitrificans (strain Pd 1222).